A 57-amino-acid polypeptide reads, in one-letter code: Potassium channel toxin alpha-KTx 8.8 (57 aa).

Positions 1–19 (MCRLYAIILIVLVMNVIMT) are cleaved as a signal peptide. Positions 20-28 (IIPDSKVEV) are excised as a propeptide. 3 disulfides stabilise this stretch: cysteine 31-cysteine 47, cysteine 34-cysteine 52, and cysteine 38-cysteine 54.

The protein belongs to the short scorpion toxin superfamily. Potassium channel inhibitor family. Alpha-KTx 08 subfamily. Contains 3 disulfide bonds. Expressed by the venom gland.

Its subcellular location is the secreted. Its function is as follows. Selectively inhibits voltage-gated potassium channels rKv1.2/KCNA2 (IC(50)=331 nM) and hKv1.3/KCNA3 (IC(50)=503 nM). Partially inihibts rKv1.6/KCNA6 (IC(50)=9983 nM). In Orthochirus scrobiculosus (Central Asian scorpion), this protein is Potassium channel toxin alpha-KTx 8.8.